The primary structure comprises 672 residues: DNA mismatch repair protein MutL (672 aa).

A compositionally biased stretch (polar residues) spans S443–S454. The segment at S443–G469 is disordered. Residues C455–S465 show a composition bias toward basic and acidic residues.

This sequence belongs to the DNA mismatch repair MutL/HexB family.

This protein is involved in the repair of mismatches in DNA. It is required for dam-dependent methyl-directed DNA mismatch repair. May act as a 'molecular matchmaker', a protein that promotes the formation of a stable complex between two or more DNA-binding proteins in an ATP-dependent manner without itself being part of a final effector complex. The chain is DNA mismatch repair protein MutL from Clostridium botulinum (strain Eklund 17B / Type B).